The chain runs to 136 residues: MSIIKEFREFAMRGNVVDLAVGVIIGAAFGKIVSSLVADIIMPPLGLLIGGIDFKQFAVTLREAQGDIPAVVMHYGVFIQNVFDFLIVAFAIFMAIKLINKLNRKKEEPAAAPAPTKEEVLLTEIRDLLKEQNNRS.

2 helical membrane passes run 10–30 and 76–96; these read FAMR…AAFG and GVFI…FMAI.

Belongs to the MscL family. As to quaternary structure, homopentamer.

The protein localises to the cell inner membrane. Its function is as follows. Channel that opens in response to stretch forces in the membrane lipid bilayer. May participate in the regulation of osmotic pressure changes within the cell. The protein is Large-conductance mechanosensitive channel of Escherichia coli O127:H6 (strain E2348/69 / EPEC).